Consider the following 146-residue polypeptide: Ribonuclease H (146 aa).

The RNase H type-1 domain maps to 1-143 (MQKKIIVYTD…CDELARQAIK (143 aa)). Mg(2+) is bound by residues D10, E48, D70, and D135.

The protein belongs to the RNase H family. In terms of assembly, monomer. Requires Mg(2+) as cofactor.

Its subcellular location is the cytoplasm. The enzyme catalyses Endonucleolytic cleavage to 5'-phosphomonoester.. Endonuclease that specifically degrades the RNA of RNA-DNA hybrids. This Chlorobium phaeobacteroides (strain DSM 266 / SMG 266 / 2430) protein is Ribonuclease H.